Consider the following 277-residue polypeptide: B3 domain-containing protein At3g19184 (277 aa).

A disordered region spans residues 33 to 94; it reads QSLRVSSSSS…LERRPRRSSR (62 aa). Positions 130–221 form a DNA-binding region, TF-B3; that stretch reads FTKPMLQSHV…TFKVYIIRVN (92 aa). A compositionally biased stretch (acidic residues) spans 224–250; that stretch reads ANNDSDGNEVNDDDSDGNEEDRDNDNE. Positions 224–277 are disordered; that stretch reads ANNDSDGNEVNDDDSDGNEEDRDNDNESNEKQKETVSEGRQLRSSGKRKRRGRK. Positions 251 to 264 are enriched in basic and acidic residues; that stretch reads SNEKQKETVSEGRQ. Basic residues predominate over residues 268–277; it reads SGKRKRRGRK.

Its subcellular location is the nucleus. The sequence is that of B3 domain-containing protein At3g19184 from Arabidopsis thaliana (Mouse-ear cress).